The following is a 63-amino-acid chain: Small ribosomal subunit protein bS21 (63 aa).

Belongs to the bacterial ribosomal protein bS21 family.

This chain is Small ribosomal subunit protein bS21, found in Azobacteroides pseudotrichonymphae genomovar. CFP2.